The following is a 2175-amino-acid chain: Homeobox protein cut (2175 aa).

2 disordered regions span residues 139-170 (NLLANTNTPSPSPPLLSAEQQQQLQSSLQQSG) and 249-432 (GNVK…GQPA). Composition is skewed to low complexity over residues 153 to 169 (LLSAEQQQQLQSSLQQS) and 249 to 268 (GNVKSGSTTSNANHTNSNNS). The stretch at 265–343 (SNNSHQDEEE…ENKDAGEASL (79 aa)) forms a coiled coil. Residues 271–294 (DEEELDDEEEDEEEDEDEDDEEEN) are compositionally biased toward acidic residues. Positions 309 to 320 (QQETRTEPSATT) are enriched in polar residues. Residues 344–359 (NVSNNHNTTDSNNSCS) are compositionally biased toward low complexity. The span at 360–374 (RKNNNGGNESEQHVA) shows a compositional bias: polar residues. The span at 384-415 (NNNTNTSNNNNTSNTATSNTNNNNNNNSSSGN) shows a compositional bias: low complexity. The stretch at 433–499 (VLLAAKDKEI…NEALAEATAL (67 aa)) forms a coiled coil. Positions 503-515 (ASTNNNNNSQSSD) are enriched in low complexity. Disordered regions lie at residues 503–600 (ASTN…KIKK) and 656–765 (ASDA…NTNA). Acidic residues predominate over residues 546-568 (AEDDEEDEDQAMLVDSEEAEDKP). The segment covering 673-696 (QQQHQHQQQHHQQQHLHQQHHHHL) has biased composition (basic residues). The span at 697–710 (QQQPNSGSNSNPAS) shows a compositional bias: low complexity. The segment covering 714–735 (HHGHHLHGHGLLHPSSAHHLHH) has biased composition (basic residues). Residues 738-765 (TESNSNSSTPTAAGNNNGSNNSSSNTNA) show a composition bias toward low complexity. Residues 877 to 964 (NMDKYANQAL…VMLLKSLIPK (88 aa)) constitute a DNA-binding region (CUT 1). Disordered stretches follow at residues 1001–1083 (LMKQ…HDDQ) and 1197–1289 (QRSS…EFAA). 2 stretches are compositionally biased toward basic and acidic residues: residues 1009–1030 (QHREQERRSHGGEDSHSNEDSK) and 1062–1083 (QREREREQREREQQQRLRHDDQ). Residues 1056-1161 (EQAAAQQRER…QQQAAQAQAQ (106 aa)) adopt a coiled-coil conformation. Low complexity predominate over residues 1249 to 1282 (GAPPTAAPPTGGASSNSAAPSPLSNSILPPALSS). A DNA-binding region (CUT 2) is located at residues 1330 to 1417 (QQQFDMFNNL…VHKLVASQYK (88 aa)). A coiled-coil region spans residues 1463 to 1522 (AQAQHLMQQMQAAAMSAAMQQQQVAQAQQQAQQAQQAQQHLQQQAQQHLQQQQHLAQQQH). Residues 1507 to 1540 (AQQHLQQQQHLAQQQHPHQQHHQAAAAAAALHHQ) are compositionally biased toward low complexity. Disordered regions lie at residues 1507–1588 (AQQH…PMLM), 1695–1747 (ERRE…PSKK), 1803–1826 (QVPHGPAGQDNPIPSRESTSATPF), 1922–1955 (RSDDYQDDLELEGGGHNLSDNESLEGQEPEDKTT), 2069–2097 (KQEEDDDEEQSGSVNLDNEDNATSEQKLK), and 2113–2175 (SSTG…GWNY). A compositionally biased stretch (gly residues) spans 1564–1573 (AQPGGPGGNQ). Residues 1608 to 1695 (YEMAALTQDL…VERLQLLKNE (88 aa)) constitute a DNA-binding region (CUT 3). Positions 1709–1732 (NQQDNSSDTSSNDTNDFYTSSPGP) are enriched in low complexity. Residues 1745-1804 (SKKQRVLFSEEQKEALRLAFALDPYPNVGTIEFLANELGLATRTITNWFHNHRMRLKQQV) constitute a DNA-binding region (homeobox). Ser1940 and Ser1944 each carry phosphoserine. Positions 2126-2135 (PLAPPPPPPA) are enriched in pro residues. The span at 2136–2175 (ASSSIVSGESTTSSSSSSNTSSSTPAVTTAAATAAAGWNY) shows a compositional bias: low complexity.

It belongs to the CUT homeobox family. Detected in many cells in the central nervous system, all external sensory organs, some peripheral neurons, and in the non-neural cells of the spiracles and the Malpighian tubules.

The protein resides in the nucleus. Functionally, regulator of cell fate decisions in multiple lineages. Specifically, functions as a determination factor that specifies sensory organ identity in precursor cells. Probably also involved in cell type specification of Malpighian tubules. In absence of cut gene external sensory organs are transformed into chordotonal organs. This chain is Homeobox protein cut (ct), found in Drosophila melanogaster (Fruit fly).